Consider the following 150-residue polypeptide: Snake venom vascular endothelial growth factor toxin barietin (150 aa).

Residues 1–24 (MAAYLLAVAILFCIQGWPSGTVQG) form the signal peptide. At Glu25 the chain carries Pyrrolidone carboxylic acid (Glu). 3 disulfides stabilise this stretch: Cys38–Cys80, Cys69–Cys115, and Cys73–Cys117. The interval 119–150 (PRSGSRVNIGKHKRSPEEGEREPSSPLTPGSL) is disordered. The propeptide occupies 122 to 150 (GSRVNIGKHKRSPEEGEREPSSPLTPGSL).

Belongs to the PDGF/VEGF growth factor family. Snake venom VEGF subfamily. As to quaternary structure, homodimer; disulfide-linked. Interacts with high affinity with VEGF receptor-2 (KDR), and with a lower affinity with VEGF receptor-1 (FLT1). Does not bind VEGF receptor-3 (FLT4) and neuropilin-1 (NRP1). In terms of tissue distribution, expressed by the venom gland.

It is found in the secreted. Snake venom VEGFs that may contribute to venom dispersion and prey subjugation by inducing vascular permeability and hypotension. This protein induces an increase in capillary permeability after intradermal injection, as well as a drastic hypotensive effect after intravenous injection. The hypotension is mediated by nitric oxide (NO), which is produced by VEGF-activated endothelium NO synthase. Also induces angiogenesis in vitro, probably through VEGF receptor (KDR/VEGFR-2) signaling. The chain is Snake venom vascular endothelial growth factor toxin barietin from Bitis arietans (African puff adder).